Reading from the N-terminus, the 187-residue chain is UPF0301 protein Sala_0165 (187 aa).

The protein belongs to the UPF0301 (AlgH) family.

In Sphingopyxis alaskensis (strain DSM 13593 / LMG 18877 / RB2256) (Sphingomonas alaskensis), this protein is UPF0301 protein Sala_0165.